The sequence spans 610 residues: Polyadenylation factor subunit 2 (610 aa).

Positions 1 to 29 (MAFYDDSGADSQPFGRPQKPYEGGIVGPR) are disordered. WD repeat units follow at residues 96–135 (KSKKPITVVRWTPEGRRLLTGGHTGEFMLWNGTAFNFETV), 142–182 (QLQA…ETID), 184–223 (AHHDAVRDLAWSPSDTKFLSASDDTTLKIFDFTSRTADTV), 226–265 (GHNWDVKSCDWHPTKGLLVSGSKDHQVKFWDPRTARCLTT), 268–308 (SHKN…DICI), 311–351 (GHEK…VPSG), and 381–420 (AHSATIWSLDWHPLGHILASGSKDNFTRFWSRARPGETSY). Disordered regions lie at residues 480–519 (PPGGTPHNDGLGSQLLPGIGAPQPPPAPSAGIPSSMPQMD) and 574–610 (GIPLPQNFAPQHFSPLPGTGGLPGLQGSNTPDNPYGR). Residues 601–610 (SNTPDNPYGR) show a composition bias toward polar residues.

The protein resides in the nucleus. Required for 3'-end cleavage and polyadenylation of pre-mRNAs. Also involved in chromosome segregation where it has a role in chromosome attachment to the mitotic spindle. In Aspergillus oryzae (strain ATCC 42149 / RIB 40) (Yellow koji mold), this protein is Polyadenylation factor subunit 2 (pfs2).